Here is a 421-residue protein sequence, read N- to C-terminus: Histidine--tRNA ligase (421 aa).

Belongs to the class-II aminoacyl-tRNA synthetase family. Homodimer.

The protein resides in the cytoplasm. It carries out the reaction tRNA(His) + L-histidine + ATP = L-histidyl-tRNA(His) + AMP + diphosphate + H(+). This is Histidine--tRNA ligase from Solidesulfovibrio magneticus (strain ATCC 700980 / DSM 13731 / RS-1) (Desulfovibrio magneticus).